The sequence spans 367 residues: Quinolinate synthase (367 aa).

Iminosuccinate is bound by residues His-46 and Ser-63. Cys-110 contributes to the [4Fe-4S] cluster binding site. Iminosuccinate contacts are provided by residues 141 to 143 (YVN) and Ser-162. Residue Cys-229 participates in [4Fe-4S] cluster binding. Residues 255-257 (HPE) and Thr-272 each bind iminosuccinate. [4Fe-4S] cluster is bound at residue Cys-319.

This sequence belongs to the quinolinate synthase family. Type 3 subfamily. [4Fe-4S] cluster serves as cofactor.

It is found in the cytoplasm. It catalyses the reaction iminosuccinate + dihydroxyacetone phosphate = quinolinate + phosphate + 2 H2O + H(+). It functions in the pathway cofactor biosynthesis; NAD(+) biosynthesis; quinolinate from iminoaspartate: step 1/1. Its function is as follows. Catalyzes the condensation of iminoaspartate with dihydroxyacetone phosphate to form quinolinate. The polypeptide is Quinolinate synthase (Bacillus velezensis (strain DSM 23117 / BGSC 10A6 / LMG 26770 / FZB42) (Bacillus amyloliquefaciens subsp. plantarum)).